The primary structure comprises 300 residues: Probable lipid kinase YegS-like (300 aa).

Residues 1–129 form the DAGKc domain; the sequence is MSKKALLILH…CDVIRVNNHY (129 aa). ATP-binding positions include T38, 64-70, and T92; that span reads GDGSVRD. The Mg(2+) site is built by L210, D213, and L215. E272 serves as the catalytic Proton acceptor.

It belongs to the diacylglycerol/lipid kinase family. YegS lipid kinase subfamily. Mg(2+) is required as a cofactor. It depends on Ca(2+) as a cofactor.

It localises to the cytoplasm. In terms of biological role, probably phosphorylates lipids; the in vivo substrate is unknown. This is Probable lipid kinase YegS-like from Alcanivorax borkumensis (strain ATCC 700651 / DSM 11573 / NCIMB 13689 / SK2).